A 749-amino-acid chain; its full sequence is Amyloid-beta A4 precursor protein-binding family A member 2 (749 aa).

Disordered stretches follow at residues 1 to 94 (MAHQ…PEEE) and 130 to 343 (DTDE…NNIP). A Phosphoserine modification is found at serine 11. Positions 70 to 80 (GDSSSDYVNNT) are enriched in polar residues. Composition is skewed to acidic residues over residues 81-94 (SEEE…PEEE) and 131-142 (TDECQEAVEEWT). The segment at 185-270 (HYCASKEGYQ…SAEACPPIKA (86 aa)) is STXBP1-binding. Serine 208 is modified (phosphoserine). A compositionally biased stretch (acidic residues) spans 218-227 (DLEDQEEDID). A compositionally biased stretch (polar residues) spans 237–247 (LSMTSITSASE). A compositionally biased stretch (basic and acidic residues) spans 305–315 (RTPEERPKWPH). The PID domain occupies 366–555 (LIDGIIFAAN…IINTQEMYND (190 aa)). PDZ domains are found at residues 568–653 (ELQL…NIVS) and 659–735 (TVLI…MPAA).

As to quaternary structure, part of a multimeric complex containing STXBP1 and syntaxin-1. Binds to the cytoplasmic domain of amyloid-beta protein, and to the nuclear factor NF-kappa-B/p65 via its PDZ domain. Interacts with the N-terminal domain of NECAB3.

In terms of biological role, putative function in synaptic vesicle exocytosis by binding to STXBP1, an essential component of the synaptic vesicle exocytotic machinery. May modulate processing of the amyloid-beta precursor protein (APP) and hence formation of APP-beta. The chain is Amyloid-beta A4 precursor protein-binding family A member 2 (APBA2) from Pongo abelii (Sumatran orangutan).